The primary structure comprises 483 residues: uncharacterized protein (483 aa).

Its subcellular location is the nucleus. It is found in the mitochondrion. This is an uncharacterized protein from Saccharomyces cerevisiae (strain ATCC 204508 / S288c) (Baker's yeast).